Reading from the N-terminus, the 196-residue chain is Ribonuclease HII (196 aa).

The 193-residue stretch at 4 to 196 (IWVCGVDEAG…PVRRVLEGSF (193 aa)) folds into the RNase H type-2 domain. Asp10, Glu11, and Asp106 together coordinate a divalent metal cation.

It belongs to the RNase HII family. Requires Mn(2+) as cofactor. Mg(2+) serves as cofactor.

Its subcellular location is the cytoplasm. The enzyme catalyses Endonucleolytic cleavage to 5'-phosphomonoester.. Endonuclease that specifically degrades the RNA of RNA-DNA hybrids. The chain is Ribonuclease HII from Polynucleobacter asymbioticus (strain DSM 18221 / CIP 109841 / QLW-P1DMWA-1) (Polynucleobacter necessarius subsp. asymbioticus).